We begin with the raw amino-acid sequence, 349 residues long: DNA replication and repair protein RecF (349 aa).

29–36 (GLNGVGKT) contributes to the ATP binding site.

This sequence belongs to the RecF family.

The protein localises to the cytoplasm. The RecF protein is involved in DNA metabolism; it is required for DNA replication and normal SOS inducibility. RecF binds preferentially to single-stranded, linear DNA. It also seems to bind ATP. The sequence is that of DNA replication and repair protein RecF from Acholeplasma laidlawii (strain PG-8A).